A 24-amino-acid polypeptide reads, in one-letter code: Skin secreted peptide 1 (24 aa).

Expressed by the skin glands.

The protein resides in the secreted. The protein is Skin secreted peptide 1 of Ascaphus truei (Coastal tailed frog).